The sequence spans 329 residues: CDP-6-deoxy-L-threo-D-glycero-4-hexulose-3-dehydrase reductase (329 aa).

One can recognise a 2Fe-2S ferredoxin-type domain in the interval 2–93 (SLNVKLHPSG…ELDVNYYPEL (92 aa)). Cysteine 37, cysteine 42, cysteine 45, and cysteine 75 together coordinate [2Fe-2S] cluster. In terms of domain architecture, FAD-binding FR-type spans 98-197 (KKTYPCKLDS…EGPQGTFFVR (100 aa)).

As to quaternary structure, monomer.

The protein operates within nucleotide-sugar biosynthesis; CDP-ascarylose biosynthesis. It participates in bacterial outer membrane biogenesis; lipopolysaccharide biosynthesis. Participates in the conversion of CDP-6-deoxy-D-glycero-L-threo-4-hexulose to 3,6-dideoxy-D-glycero-D-glycero-4-hexulose together with CDP-6-deoxy-D-glycero-L-threo-4-hexulose-3-dehydrase (E1) in two consecutive steps. The detailed mechanism of E3 is not yet resolved. The polypeptide is CDP-6-deoxy-L-threo-D-glycero-4-hexulose-3-dehydrase reductase (ascD) (Yersinia pestis).